Consider the following 434-residue polypeptide: 3-phosphoshikimate 1-carboxyvinyltransferase (434 aa).

The 3-phosphoshikimate site is built by Lys15, Ser16, and Arg20. Lys15 contributes to the phosphoenolpyruvate binding site. 2 residues coordinate phosphoenolpyruvate: Gly96 and Arg124. Ser169, Gln171, Ser195, Asp319, and Lys346 together coordinate 3-phosphoshikimate. Gln171 contacts phosphoenolpyruvate. Asp319 acts as the Proton acceptor in catalysis. Residues Arg350 and Arg394 each contribute to the phosphoenolpyruvate site.

The protein belongs to the EPSP synthase family. As to quaternary structure, monomer.

It is found in the cytoplasm. The catalysed reaction is 3-phosphoshikimate + phosphoenolpyruvate = 5-O-(1-carboxyvinyl)-3-phosphoshikimate + phosphate. It participates in metabolic intermediate biosynthesis; chorismate biosynthesis; chorismate from D-erythrose 4-phosphate and phosphoenolpyruvate: step 6/7. Functionally, catalyzes the transfer of the enolpyruvyl moiety of phosphoenolpyruvate (PEP) to the 5-hydroxyl of shikimate-3-phosphate (S3P) to produce enolpyruvyl shikimate-3-phosphate and inorganic phosphate. This chain is 3-phosphoshikimate 1-carboxyvinyltransferase, found in Chlorobaculum parvum (strain DSM 263 / NCIMB 8327) (Chlorobium vibrioforme subsp. thiosulfatophilum).